The chain runs to 128 residues: Large ribosomal subunit protein bL17 (128 aa).

Belongs to the bacterial ribosomal protein bL17 family. As to quaternary structure, part of the 50S ribosomal subunit. Contacts protein L32.

In Streptococcus pneumoniae serotype 4 (strain ATCC BAA-334 / TIGR4), this protein is Large ribosomal subunit protein bL17.